Here is a 357-residue protein sequence, read N- to C-terminus: DNA replication and repair protein RecF (357 aa).

ATP is bound at residue 31–38; the sequence is GQNGAGKT.

The protein belongs to the RecF family.

The protein localises to the cytoplasm. The RecF protein is involved in DNA metabolism; it is required for DNA replication and normal SOS inducibility. RecF binds preferentially to single-stranded, linear DNA. It also seems to bind ATP. The chain is DNA replication and repair protein RecF from Coxiella burnetii (strain Dugway 5J108-111).